We begin with the raw amino-acid sequence, 201 residues long: Small ribosomal subunit protein uS4 (201 aa).

The 64-residue stretch at 91–154 folds into the S4 RNA-binding domain; the sequence is SRLDNVIYRA…QKMEWFEEAQ (64 aa).

It belongs to the universal ribosomal protein uS4 family. As to quaternary structure, part of the 30S ribosomal subunit. Contacts protein S5. The interaction surface between S4 and S5 is involved in control of translational fidelity.

Functionally, one of the primary rRNA binding proteins, it binds directly to 16S rRNA where it nucleates assembly of the body of the 30S subunit. Its function is as follows. With S5 and S12 plays an important role in translational accuracy. The polypeptide is Small ribosomal subunit protein uS4 (Corynebacterium aurimucosum (strain ATCC 700975 / DSM 44827 / CIP 107346 / CN-1) (Corynebacterium nigricans)).